We begin with the raw amino-acid sequence, 657 residues long: Kinesin-like protein KIF22 (657 aa).

The tract at residues 1–33 (MNVRAKKKPQQREMASASSGPSRSLSKGGVSRR) is disordered. A compositionally biased stretch (low complexity) spans 16–33 (SASSGPSRSLSKGGVSRR). Residues 38-360 (RVRVAVRLRP…LNFTARSKEV (323 aa)) enclose the Kinesin motor domain. 119 to 126 (GPTGAGKT) serves as a coordination point for ATP. The disordered stretch occupies residues 388–415 (PSEAKKAKGPEEESTGSPESTAAPASAS). Positions 402-415 (TGSPESTAAPASAS) are enriched in low complexity. Phosphoserine is present on residues serine 404, serine 419, and serine 444. Residue lysine 457 forms a Glycyl lysine isopeptide (Lys-Gly) (interchain with G-Cter in SUMO2) linkage. Positions 457–502 (KRERMVLIKTVEEKNLEIERLKMKQKELEAKVLAQEALDPKEKENT) form a coiled coil. A phosphoserine mark is found at serine 537, serine 554, and serine 573.

Belongs to the TRAFAC class myosin-kinesin ATPase superfamily. Kinesin family. As to quaternary structure, interacts with FAM83D and SIAH1. In terms of processing, ubiquitinated; mediated by SIAH1 and leading to its subsequent proteasomal degradation.

The protein localises to the nucleus. Its subcellular location is the cytoplasm. It is found in the cytoskeleton. Kinesin family member that is involved in spindle formation and the movements of chromosomes during mitosis and meiosis. Binds to microtubules and to DNA. Plays a role in congression of laterally attached chromosomes in NDC80-depleted cells. The protein is Kinesin-like protein KIF22 (Kif22) of Rattus norvegicus (Rat).